The primary structure comprises 219 residues: Putative germin-like protein 8-1 (219 aa).

An N-terminal signal peptide occupies residues 1–23; that stretch reads MASFISFLLLAALIGMASWQAIA. Cysteines 33 and 48 form a disulfide. Residues N53 and N79 are each glycosylated (N-linked (GlcNAc...) asparagine). The Cupin type-1 domain maps to 63–215; the sequence is AMLDKPRDTA…AFQVDKKIID (153 aa). The Mn(2+) site is built by H112, H114, E119, and H160.

It belongs to the germin family. In terms of assembly, oligomer (believed to be a pentamer but probably hexamer).

It is found in the secreted. Its subcellular location is the extracellular space. The protein resides in the apoplast. Functionally, plays a role in broad-spectrum disease resistance. Probably has no oxalate oxidase activity even if the active site is conserved. The sequence is that of Putative germin-like protein 8-1 from Oryza sativa subsp. japonica (Rice).